Here is a 598-residue protein sequence, read N- to C-terminus: Elongation factor 4 (598 aa).

One can recognise a tr-type G domain in the interval 4–186 (SRLRNFSIIA…EIVKKIPPPK (183 aa)). GTP is bound by residues 16–21 (DHGKST) and 133–136 (NKID).

Belongs to the TRAFAC class translation factor GTPase superfamily. Classic translation factor GTPase family. LepA subfamily.

It localises to the cell inner membrane. It carries out the reaction GTP + H2O = GDP + phosphate + H(+). Its function is as follows. Required for accurate and efficient protein synthesis under certain stress conditions. May act as a fidelity factor of the translation reaction, by catalyzing a one-codon backward translocation of tRNAs on improperly translocated ribosomes. Back-translocation proceeds from a post-translocation (POST) complex to a pre-translocation (PRE) complex, thus giving elongation factor G a second chance to translocate the tRNAs correctly. Binds to ribosomes in a GTP-dependent manner. In Pelobacter propionicus (strain DSM 2379 / NBRC 103807 / OttBd1), this protein is Elongation factor 4.